Consider the following 511-residue polypeptide: Ribonuclease Y (511 aa).

A helical transmembrane segment spans residues 2-22; the sequence is ITTVIIAIVCFAVGGGLSYML. In terms of domain architecture, KH spans 201–261; it reads SVTVFHIESD…VRREIARLAL (61 aa). The HD domain maps to 327 to 420; sequence LLQHARETAN…VQVCDAISGA (94 aa).

Belongs to the RNase Y family.

It localises to the cell membrane. Endoribonuclease that initiates mRNA decay. The polypeptide is Ribonuclease Y (Phocaeicola vulgatus (strain ATCC 8482 / DSM 1447 / JCM 5826 / CCUG 4940 / NBRC 14291 / NCTC 11154) (Bacteroides vulgatus)).